The chain runs to 209 residues: Shikimate kinase (209 aa).

47–52 (GAGKTT) is an ATP binding site. Thr51 provides a ligand contact to Mg(2+). Substrate-binding residues include Asp69, Arg93, and Gly115. Arg153 provides a ligand contact to ATP. Arg172 lines the substrate pocket.

Belongs to the shikimate kinase family. In terms of assembly, monomer. Mg(2+) serves as cofactor.

It localises to the cytoplasm. It carries out the reaction shikimate + ATP = 3-phosphoshikimate + ADP + H(+). Its pathway is metabolic intermediate biosynthesis; chorismate biosynthesis; chorismate from D-erythrose 4-phosphate and phosphoenolpyruvate: step 5/7. In terms of biological role, catalyzes the specific phosphorylation of the 3-hydroxyl group of shikimic acid using ATP as a cosubstrate. In Bordetella avium (strain 197N), this protein is Shikimate kinase.